The sequence spans 170 residues: 6,7-dimethyl-8-ribityllumazine synthase 2 (170 aa).

5-amino-6-(D-ribitylamino)uracil is bound by residues Trp25, 59 to 61 (AFE), and 83 to 85 (LVV). Arg91 (proton donor) is an active-site residue. Ser116 contributes to the 5-amino-6-(D-ribitylamino)uracil binding site. (2S)-2-hydroxy-3-oxobutyl phosphate is bound at residue His130.

The protein belongs to the DMRL synthase family. Forms an icosahedral capsid composed of 60 subunits, arranged as a dodecamer of pentamers.

The catalysed reaction is (2S)-2-hydroxy-3-oxobutyl phosphate + 5-amino-6-(D-ribitylamino)uracil = 6,7-dimethyl-8-(1-D-ribityl)lumazine + phosphate + 2 H2O + H(+). Its pathway is cofactor biosynthesis; riboflavin biosynthesis; riboflavin from 2-hydroxy-3-oxobutyl phosphate and 5-amino-6-(D-ribitylamino)uracil: step 1/2. Its function is as follows. Catalyzes the formation of 6,7-dimethyl-8-ribityllumazine by condensation of 5-amino-6-(D-ribitylamino)uracil with 3,4-dihydroxy-2-butanone 4-phosphate. This is the penultimate step in the biosynthesis of riboflavin. The protein is 6,7-dimethyl-8-ribityllumazine synthase 2 of Pseudomonas syringae pv. tomato (strain ATCC BAA-871 / DC3000).